The sequence spans 584 residues: Arginine--tRNA ligase (584 aa).

The 'HIGH' region signature appears at 130-140 (PNVAKEMHVGH).

It belongs to the class-I aminoacyl-tRNA synthetase family. In terms of assembly, monomer.

It is found in the cytoplasm. It carries out the reaction tRNA(Arg) + L-arginine + ATP = L-arginyl-tRNA(Arg) + AMP + diphosphate. The polypeptide is Arginine--tRNA ligase (Protochlamydia amoebophila (strain UWE25)).